We begin with the raw amino-acid sequence, 1307 residues long: CRISPR-associated endonuclease Cas12a (1307 aa).

The interval M1–G35 is WED-I (OBD-I). The tract at residues F36–L320 is REC1 (helical-I). A crRNA-binding site is contributed by Y47–K51. Positions E74–I106 form a coiled coil. Residues N175–R176 and K307–L310 each bind crRNA. Positions E321–Y526 are WED-II (helical-II). The WED-II (OBD-I) stretch occupies residues S527–F598. The PAM-binding on target DNA DNA-binding region spans P599–K607. The segment at P599–L718 is PI (LHD). A WED-III (OBD-III) region spans residues Y719 to S884. Residue K752–H761 coordinates crRNA. Positions K780–G783 form a DNA-binding region, target DNA. The active-site For pre-crRNA processing is the H800. Residue M806–N808 coordinates crRNA. Catalysis depends on for pre-crRNA processing residues K809 and K860. Positions P885–Y940 are ruvC-I. The For DNase activity of RuvC domain role is filled by D908. Positions Q941–A957 are bridge helix. The target DNA DNA-binding region spans R951–K968. Residues W958 to P1066 form a ruvC-II region. Catalysis depends on E993, which acts as the For DNase activity of RuvC domain. A DNA-binding region (target DNA) is located at residues S1051–A1053. Residues A1067–A1262 form a nuclease domain region. R1226 functions as the For DNase activity of nuclease domain in the catalytic mechanism. The For DNase activity of RuvC domain role is filled by D1263. The segment at D1263–N1307 is ruvC-III.

The protein belongs to the CRISPR-associated endonuclease Cas12a family. Monomer. The cofactor is Mg(2+).

It catalyses the reaction Endonucleolytic cleavage to 5'-phosphodinucleotide and 5'-phosphooligonucleotide end-products.. The enzyme catalyses RNA = a 5'-hydroxy-ribonucleotide + n nucleoside-2',3'-cyclophosphates.. Its function is as follows. CRISPR (clustered regularly interspaced short palindromic repeat), is an adaptive immune system that provides protection against mobile genetic elements (viruses, transposable elements and conjugative plasmids). CRISPR clusters contain sequences complementary to antecedent mobile elements and target invading nucleic acids. CRISPR clusters are transcribed and processed into CRISPR RNA (crRNA). Recognizes a short motif in the CRISPR repeat sequences (the 5' PAM or protospacer adjacent motif, TTTN in this organism) to help distinguish self versus nonself, as targets within the bacterial CRISPR locus do not have PAMs. Has dsDNA endonuclease activity, results in staggered 4-base 5' overhangs 19 and 22 bases downstream of the PAM on the non-targeted and targeted strand respectively. Non-target strand cleavage by the RuvC domain is probably a prerequisite of target strand cleavage by the Nuc domain. Protects E.coli against plasmids and bacteriophage M13mp18, phage T4 with hydroxymethyl or unmodified (but not glycosylated) cytosines and to a lesser extent against lambda and VpaE1 phage. In this CRISPR system correct processing of pre-crRNA requires only this protein and the CRISPR locus. The chain is CRISPR-associated endonuclease Cas12a from Acidaminococcus sp. (strain BV3L6).